The sequence spans 414 residues: Dual-specificity RNA methyltransferase RlmN (414 aa).

E127 acts as the Proton acceptor in catalysis. A Radical SAM core domain is found at G133 to D380. An intrachain disulfide couples C140 to C385. [4Fe-4S] cluster is bound by residues C147, C151, and C154. Residues G211–E212, S243, S265–H267, and N342 each bind S-adenosyl-L-methionine. The active-site S-methylcysteine intermediate is the C385.

The protein belongs to the radical SAM superfamily. RlmN family. [4Fe-4S] cluster serves as cofactor.

It localises to the cytoplasm. The catalysed reaction is adenosine(2503) in 23S rRNA + 2 reduced [2Fe-2S]-[ferredoxin] + 2 S-adenosyl-L-methionine = 2-methyladenosine(2503) in 23S rRNA + 5'-deoxyadenosine + L-methionine + 2 oxidized [2Fe-2S]-[ferredoxin] + S-adenosyl-L-homocysteine. It catalyses the reaction adenosine(37) in tRNA + 2 reduced [2Fe-2S]-[ferredoxin] + 2 S-adenosyl-L-methionine = 2-methyladenosine(37) in tRNA + 5'-deoxyadenosine + L-methionine + 2 oxidized [2Fe-2S]-[ferredoxin] + S-adenosyl-L-homocysteine. Its function is as follows. Specifically methylates position 2 of adenine 2503 in 23S rRNA and position 2 of adenine 37 in tRNAs. m2A2503 modification seems to play a crucial role in the proofreading step occurring at the peptidyl transferase center and thus would serve to optimize ribosomal fidelity. The sequence is that of Dual-specificity RNA methyltransferase RlmN from Bartonella bacilliformis (strain ATCC 35685 / KC583 / Herrer 020/F12,63).